A 303-amino-acid polypeptide reads, in one-letter code: Acetylglutamate kinase (303 aa).

Residues Gly68–Gly69, Arg90, and Asn194 contribute to the substrate site.

It belongs to the acetylglutamate kinase family. ArgB subfamily.

It localises to the cytoplasm. The catalysed reaction is N-acetyl-L-glutamate + ATP = N-acetyl-L-glutamyl 5-phosphate + ADP. Its pathway is amino-acid biosynthesis; L-arginine biosynthesis; N(2)-acetyl-L-ornithine from L-glutamate: step 2/4. Its function is as follows. Catalyzes the ATP-dependent phosphorylation of N-acetyl-L-glutamate. The protein is Acetylglutamate kinase of Psychrobacter arcticus (strain DSM 17307 / VKM B-2377 / 273-4).